The sequence spans 1858 residues: Inactive histone-lysine N-methyltransferase 2E (1858 aa).

An HCFC1-binding motif (HBM) motif is present at residues 63-66; that stretch reads DHNY. Residues 118–166 form a PHD-type zinc finger; that stretch reads VTRCICGFTHDDGYMICCDKCSVWQHIDCMGIDRQHIPDTYLCERCQPR. Residues Cys121, Cys123, Cys135, Cys138, His143, Cys146, Cys160, and Cys163 each coordinate Zn(2+). The tract at residues 217–269 is disordered; that stretch reads ASRVSKVNDKRRKKSGEKEQHISKCKKAFREGSRKSSRVKGSAPEIDPSSDGS. The segment covering 232-250 has biased composition (basic and acidic residues); that stretch reads GEKEQHISKCKKAFREGSR. The 118-residue stretch at 330–447 folds into the SET domain; sequence PPVESHIQKN…KGTEITIAFD (118 aa). O-linked (GlcNAc) serine glycosylation occurs at Ser435. O-linked (GlcNAc) threonine glycosylation is present at Thr440. Residues 475-530 form a disordered region; it reads SESMENINSGYETRRKKGKKDKDISKEKDTQNQNITLDCEGTTNKMKSPETKQRKL. The segment covering 494–504 has biased composition (basic and acidic residues); that stretch reads KDKDISKEKDT. Residues 505–520 are compositionally biased toward polar residues; sequence QNQNITLDCEGTTNKM. Residues 559–615 adopt a coiled-coil conformation; it reads VEMESEEQIAERKRKMTREERKMEAILQAFARLEKREKRREQALERISTAKTEVKTE. The residue at position 623 (Ser623) is a Phosphoserine. The tract at residues 630–687 is disordered; it reads EQAKEENASKPTPAKVNRTKQRKSFSRSRTHIGQQRRRHRTVSMCSDIQPSSPDIEVT. Positions 646 to 670 are enriched in basic residues; the sequence is NRTKQRKSFSRSRTHIGQQRRRHRT. A compositionally biased stretch (polar residues) spans 672-687; that stretch reads SMCSDIQPSSPDIEVT. Residues Ser837 and Ser845 each carry the phosphoserine modification. Low complexity-rich tracts occupy residues 887 to 901 and 933 to 957; these read TSTP…PTHT and PVTP…PESS. Disordered regions lie at residues 887-960 and 1039-1068; these read TSTP…SPEI and LETP…SSWV. The span at 1039–1048 shows a compositional bias: basic and acidic residues; that stretch reads LETPAHDRAE. The segment covering 1049-1068 has biased composition (polar residues); it reads PNSQLDSTHSGRGTMYSSWV. Ser1070 carries the phosphoserine modification. 2 disordered regions span residues 1164 to 1561 and 1581 to 1835; these read KRQR…QNQQ and VFTS…PVPG. Polar residues-rich tracts occupy residues 1186-1206 and 1222-1235; these read PHAS…NDNG and TVYN…SNNC. Ser1273 is modified (phosphoserine). The span at 1273–1282 shows a compositional bias: basic and acidic residues; the sequence is SDHRKDKDSG. Low complexity-rich tracts occupy residues 1285–1303 and 1349–1362; these read SPCV…SSHS and KSPP…SPGS. Phosphoserine is present on Ser1359. Composition is skewed to polar residues over residues 1400–1432 and 1506–1542; these read QQKQ…SQKL and LPAN…LNST. The segment covering 1543–1553 has biased composition (pro residues); that stretch reads APPPPPPPPPS. Positions 1581–1599 are enriched in polar residues; the sequence is VFTSGPNQALPGTTSQQTV. A compositionally biased stretch (pro residues) spans 1626–1637; sequence VPPPPPPPPAPG. Residues 1642 to 1651 are compositionally biased toward polar residues; that stretch reads QQPNSHQQHS. Pro residues predominate over residues 1677–1687; sequence LPPPPPPPGPA. Polar residues predominate over residues 1698–1711; sequence TGLQGLQAQHQHVV. Over residues 1714-1724 the composition is skewed to pro residues; it reads APPPPPPPPPS. The span at 1798 to 1808 shows a compositional bias: polar residues; sequence QGPNSIPTPTA.

The protein belongs to the class V-like SAM-binding methyltransferase superfamily. Histone-lysine methyltransferase family. TRX/MLL subfamily. In terms of assembly, component of a complex composed of KMT2E (isoform 3), OGT and USP7; the complex stabilizes KMT2E, preventing KMT2E ubiquitination and proteasomal-mediated degradation. Isoform 3 interacts (via N-terminus) with OGT (via TRP repeats). Isoform 3 interacts with deubiquitinating enzyme USP7 (via MATH domain). Isoform 3 interacts (via HBM motif) with HCFC1 (via Kelch domain). Isoform 3 interacts with E2F1; the interaction is probably indirect and is mediated via HCFC1. In terms of processing, ubiquitinated. Deubiquitinated by USP7. O-glycosylated at Ser-435 and Thr-440 in the SET domain by OGT which probably prevents KMT2E proteasomal-mediated degradation. In terms of tissue distribution, widely expressed in both adult and fetal tissues. Highest levels of expression observed in fetal thymus and kidney and in adult hematopoietic tissues, jejunum and cerebellum. Isoform NKp44L: Not detected on circulating cells from healthy individuals, but is expressed on a large panel of tumor and transformed cells.

It localises to the chromosome. The protein localises to the cytoplasm. Its subcellular location is the cytoskeleton. The protein resides in the microtubule organizing center. It is found in the centrosome. It localises to the nucleus speckle. The protein localises to the nucleus. Its subcellular location is the nucleoplasm. The protein resides in the cell membrane. Associates with chromatin regions downstream of transcriptional start sites of active genes and thus regulates gene transcription. Chromatin interaction is mediated via the binding to tri-methylated histone H3 at 'Lys-4' (H3K4me3). Key regulator of hematopoiesis involved in terminal myeloid differentiation and in the regulation of hematopoietic stem cell (HSCs) self-renewal by a mechanism that involves DNA methylation. Also acts as an important cell cycle regulator, participating in cell cycle regulatory network machinery at multiple cell cycle stages including G1/S transition, S phase progression and mitotic entry. Recruited to E2F1 responsive promoters by HCFC1 where it stimulates tri-methylation of histone H3 at 'Lys-4' and transcriptional activation and thereby facilitates G1 to S phase transition. During myoblast differentiation, required to suppress inappropriate expression of S-phase-promoting genes and maintain expression of determination genes in quiescent cells. In terms of biological role, cellular ligand for NCR2/NKp44, may play a role as a danger signal in cytotoxicity and NK-cell-mediated innate immunity. This is Inactive histone-lysine N-methyltransferase 2E (KMT2E) from Homo sapiens (Human).